Reading from the N-terminus, the 179-residue chain is M-phase-specific PLK1-interacting protein (179 aa).

Positions 1 to 135 are disordered; that stretch reads MQRQNFRPPT…RVREKRMSNE (135 aa). Position 37 is an asymmetric dimethylarginine (Arg-37). 2 positions are modified to phosphoserine: Ser-40 and Ser-47. Thr-51 carries the post-translational modification Phosphothreonine. An Omega-N-methylarginine modification is found at Arg-57. Asymmetric dimethylarginine occurs at positions 59 and 68. Positions 60-71 are enriched in low complexity; the sequence is PYGSSHSPRHGG. At Ser-72 the chain carries Phosphoserine. Arg-77 carries the post-translational modification Asymmetric dimethylarginine. Positions 79 to 109 are enriched in low complexity; it reads GSPSPGGYPGSYSRSPAGSQQQFGYSPGQQQ. Residues Ser-80, Ser-82, Ser-93, Ser-104, and Ser-115 each carry the phosphoserine modification. Positions 110–122 are enriched in polar residues; that stretch reads THPQGSPRTSTPF. Arg-117 is modified (omega-N-methylarginine). Phosphothreonine is present on Thr-120. Phosphoserine occurs at positions 124 and 133.

In terms of assembly, interacts with PLK1; phosphorylation-dependent. In terms of processing, phosphorylated during mitosis in the cell cycle probably by CDK1. Expressed at highest levels in liver and kidney; intermediate expression in skeletal muscle, pancreas, heart and placenta; low expression in brain and lung. Expressed in epidermis and hair follicles.

The protein localises to the nucleus. It localises to the cytoplasm. It is found in the cytoskeleton. The protein resides in the microtubule organizing center. Its subcellular location is the centrosome. Its function is as follows. May play a role in maintenance of cell cycle integrity by regulating mitosis or cytokinesis. This chain is M-phase-specific PLK1-interacting protein (MPLKIP), found in Homo sapiens (Human).